The sequence spans 419 residues: CinA-like protein (419 aa).

It belongs to the CinA family.

In Parasynechococcus marenigrum (strain WH8102), this protein is CinA-like protein.